The sequence spans 315 residues: Ribosomal RNA small subunit methyltransferase H (315 aa).

S-adenosyl-L-methionine-binding positions include Gly-37–His-39, Asp-57, Phe-83, Asp-105, and Gln-112.

Belongs to the methyltransferase superfamily. RsmH family.

It is found in the cytoplasm. It catalyses the reaction cytidine(1402) in 16S rRNA + S-adenosyl-L-methionine = N(4)-methylcytidine(1402) in 16S rRNA + S-adenosyl-L-homocysteine + H(+). Its function is as follows. Specifically methylates the N4 position of cytidine in position 1402 (C1402) of 16S rRNA. This is Ribosomal RNA small subunit methyltransferase H from Pseudomonas putida (strain GB-1).